Consider the following 315-residue polypeptide: NADH-cytochrome b5 reductase-like (315 aa).

The 37-residue stretch at arginine 19–lysine 55 folds into the Oxidoreductase-like domain. Residues glutamate 75–lysine 177 enclose the FAD-binding FR-type domain. FAD-binding positions include glutamate 157 to glycine 172 and glycine 182 to threonine 214.

It belongs to the flavoprotein pyridine nucleotide cytochrome reductase family. FAD is required as a cofactor.

The catalysed reaction is 2 Fe(III)-[cytochrome b5] + NADH = 2 Fe(II)-[cytochrome b5] + NAD(+) + H(+). NADH-cytochrome b5 reductases are involved in desaturation and elongation of fatty acids, cholesterol biosynthesis, drug metabolism, and, in erythrocyte, methemoglobin reduction. The polypeptide is NADH-cytochrome b5 reductase-like (CYB5RL) (Homo sapiens (Human)).